The primary structure comprises 502 residues: Glutamate--tRNA ligase (502 aa).

Positions proline 9–threonine 19 match the 'HIGH' region motif. A 'KMSKS' region motif is present at residues lysine 250–arginine 254. Lysine 253 is a binding site for ATP.

It belongs to the class-I aminoacyl-tRNA synthetase family. Glutamate--tRNA ligase type 1 subfamily. In terms of assembly, monomer.

It localises to the cytoplasm. The catalysed reaction is tRNA(Glu) + L-glutamate + ATP = L-glutamyl-tRNA(Glu) + AMP + diphosphate. In terms of biological role, catalyzes the attachment of glutamate to tRNA(Glu) in a two-step reaction: glutamate is first activated by ATP to form Glu-AMP and then transferred to the acceptor end of tRNA(Glu). This is Glutamate--tRNA ligase from Acinetobacter baylyi (strain ATCC 33305 / BD413 / ADP1).